Consider the following 142-residue polypeptide: MAKKVQAYVKLQVAAGMANPSPPVGPALGQQGVNIMEFCKAFNAKTESIEKGLPTPVVITVYSDRSFTFVTKTPPAAVLLKKAAGIKSGSGKPNKDKVGKVTSAQVREIAETKAADMTGSDVDAMVRSIAGTARSMGLVVED.

Belongs to the universal ribosomal protein uL11 family. As to quaternary structure, part of the ribosomal stalk of the 50S ribosomal subunit. Interacts with L10 and the large rRNA to form the base of the stalk. L10 forms an elongated spine to which L12 dimers bind in a sequential fashion forming a multimeric L10(L12)X complex. In terms of processing, one or more lysine residues are methylated.

Its function is as follows. Forms part of the ribosomal stalk which helps the ribosome interact with GTP-bound translation factors. This is Large ribosomal subunit protein uL11 from Pectobacterium atrosepticum (strain SCRI 1043 / ATCC BAA-672) (Erwinia carotovora subsp. atroseptica).